The chain runs to 257 residues: Zinc transporter ZupT (257 aa).

8 helical membrane-spanning segments follow: residues 5–25, 32–52, 61–81, 109–129, 137–157, 171–191, 195–215, and 236–256; these read LILT…GVLG, LLAF…LMEM, GMSP…YLGL, AILL…ATFV, LGFG…LAVV, ILWA…AWLI, MISP…MVAL, and GVLC…TAGI. The Fe(2+) site is built by Asn-120 and Glu-123. 2 residues coordinate Zn(2+): Glu-123 and His-148. Fe(2+) is bound by residues Asn-149, Glu-152, and Glu-181. Glu-152 serves as a coordination point for Zn(2+).

This sequence belongs to the ZIP transporter (TC 2.A.5) family. ZupT subfamily.

Its subcellular location is the cell inner membrane. The catalysed reaction is Zn(2+)(in) = Zn(2+)(out). Functionally, mediates zinc uptake. May also transport other divalent cations. The sequence is that of Zinc transporter ZupT from Shigella dysenteriae serotype 1 (strain Sd197).